The primary structure comprises 356 residues: MTTPEDIIRRDVLAMTGYPVPDATGFVKLDAMENPYSLPAPLAAELGERLAHVALNRYPAPRPAALIDRLRAVTGVPAACDVLLGNGSDEIISMLAMACAKPGAKVLAPVPGFVMYELSAKFAQLEFVGVPLRADLTLDIDAMLAALAEHRPALVYLAYPNNPTGTLYPDEDVERIIAAAAASLVVIDEAYQPFAQRSWLPRAAQFDNVVVMRTMSKLGLAGIRLGYLVGLPAWLVQFDKVRPPYNVNVLTQAAAEFLLERVDVLDAQAAQLRDARTALAHAIGALPGATVFPSAGNFLLVRVPDAAAVFDVLLTERVLIKNVSKMHPLLANCVRVTVGSPEENARLLAALKLALP.

At lysine 217 the chain carries N6-(pyridoxal phosphate)lysine.

This sequence belongs to the class-II pyridoxal-phosphate-dependent aminotransferase family. Histidinol-phosphate aminotransferase subfamily. Homodimer. Requires pyridoxal 5'-phosphate as cofactor.

The catalysed reaction is L-histidinol phosphate + 2-oxoglutarate = 3-(imidazol-4-yl)-2-oxopropyl phosphate + L-glutamate. It functions in the pathway amino-acid biosynthesis; L-histidine biosynthesis; L-histidine from 5-phospho-alpha-D-ribose 1-diphosphate: step 7/9. In Burkholderia mallei (strain ATCC 23344), this protein is Histidinol-phosphate aminotransferase 1.